The chain runs to 1556 residues: MTDKESEQCTVSVFDQTPGSEQKKINVVVRSHFTVKRVIDLIGTQFSYEKFELLLQPHDNKDLVNLNALESQLMYEVAGFEPQLKNHLILLPSGSWDGDVTKRFELPIKRVVVKKVMKSDGEKAKSPATGEKKKRVVGEKTKKKPASGSSSPSKAKTTSEDSLAKTSISSESSPEKTSKIKTTAAKISKPGSEKAPRASPEECPELSTEINSKNTSSESPVAKKTAKVTSKPTLELLSPIKPSSPIKELDCEPVDTLSKQQLSEQLQLYPQGRNLISPVDDAPSDLFISDAEQLSDDDLALGASASPTMLGPGYDYGAPTGDSDVEGVTGVTDPSTIGTDDGTYPALSNFYRRKYGGDELRAWQRVNTTGADFVSSATTETEAEARQASLGPRGYVGLVNQAMTCYLNSLLQALFMTPEFRNALYRWEFDNDNEAKNIPYQLQKLFLNLQTSPKAAVETTDLTRSFGWDSTEAWQQHDIQELCRVMFDALEHKFKNTKQANLISNLYEGKMNDYVKCLECNTEKTREDTFLDIPLPVRPFGSSSAYGSIEEALRAFVQPETLDGNNQYLCEKCKKKCDAHKGLHFKSFPYILTLHLKRFDFDYQTMHRIKLNDRVTFPQTLNLNTFINRSGNSGEQNSQLNGTVDDCSTADSGSAMEDDNLSSGVVTTASSSQHENDLNDEDEGIDMSSSTSKSAKQGSGPYLYELFAIMIHSGSASGGHYYAYIKDFDNNEWFCFNDQNVTSITQEDIQRSFGGPNGSYYSSAYTSSTNAYMLMYRQVDAKRNELVAKVADFPEHIKTLLPKLHSEEETRVSRLGRHITVTDLALPDLYKPRVYFYNPSLKKMKITRVYVSQSFNINLVLMSAYEMLNVEQFAPLSRCRLVAYNSSMDTIIQSLESCTDPALTELRAAQNYSLDFLLEYRAEDQEFEVYPPNGITWYVFKVDLSTMAMDGPFLVYSAAREREASDVLRRSIALRLHISEQQFLLATVRATVPKAFVSYDPHPTPEALQHLQNMANTQFKSITYFYLNVPNTDAATLEMLGVPTVESVECASGGDVVDAAMMNGVAPGHMSSSNDYDWRRYKRDLVEPMSQPSPSHGHESNSEDSSLSDGDRTLVETDNMAHRGGGDSQVSSTSHSPQLSSPEDEAASHDAMMRVHAYCNGNGSYAAADVVDPLLLPTSTNHFFYATKVECVDVVGTGSSSGHQSDEEAQLRKPTRAYKLLVGTHMRMGAFKKHIEQLIQVPAAHFKLQRKHDNNLSNNQNNSLVHLIEGETLTVELGKTLEPDEFKAKIHFLRLADIDNETSKLPCVCEWVYNANTTAEQAKKELVAKLHRIDAKYATLSVQNCRIWLKGGRIPIKILSDDETLYCDMRSSIAAEFIVQECEEEVDPQPKDDSLTLFVRRWCPAKLEFGKFQEITLDQDSEIRLSLSQISDIPIDKLSYMKLNSNFPCTSISALSVNESSSWYSVPTTLDKYPLNSTQTGNIYLYKDRTVPARELTLEERRLMNAREKARLDRVGCVSTTRYAQRRERALKIYLDSPEKSSNVTASAPMDVHVNN.

The tract at residues Met117–Lys231 is disordered. Over residues Ala146 to Lys156 the composition is skewed to low complexity. A phosphoserine mark is found at Ser172 and Ser173. The segment covering Ile180 to Lys189 has biased composition (low complexity). Residues Gly191–Pro200 are compositionally biased toward basic and acidic residues. Positions Thr208–Ser219 are enriched in polar residues. Phosphoserine is present on Ser238. The region spanning Val396–Val779 is the USP domain. Residue Cys405 is the Nucleophile of the active site. 2 stretches are compositionally biased toward polar residues: residues Asn628 to Gly642 and Leu661 to Gln673. The tract at residues Asn628–Gln697 is disordered. A compositionally biased stretch (low complexity) spans Ser688 to Gln697. The Proton acceptor role is filled by His720. The tract at residues Glu1087–Ser1148 is disordered. Residues Asp1109 to Gly1125 are compositionally biased toward basic and acidic residues. A compositionally biased stretch (low complexity) spans Ser1128 to Ser1141. Ser1131, Ser1132, Ser1140, Ser1141, Ser1199, Ser1201, and Ser1205 each carry phosphoserine.

It belongs to the peptidase C19 family. In terms of assembly, interacts with ttk.

It is found in the nucleus. It catalyses the reaction Thiol-dependent hydrolysis of ester, thioester, amide, peptide and isopeptide bonds formed by the C-terminal Gly of ubiquitin (a 76-residue protein attached to proteins as an intracellular targeting signal).. Its function is as follows. Ubiquitin-specific protease that deubiquitinates target proteins to regulate different cellular and developmental pathways. Functions downstream of Dsor1/MEK to positively regulate the Ras/MAPK signaling pathway. Likely to modulate the pathway during various cellular and developmental processes including rl/MAPK activation by the receptors InR, Egfr and sevenless/sev. Functions in the post-translational stabilization of rl/MAPK levels in a mechanism that is independent of rl activity and opposes the activity of the E2 enzyme Unc6 and the putative E3 ligases poe, Ufd4 and Kcmf1, which mediate the ubiquitination and proteasomal degradation of rl. During eye development it may also act downstream of rl/MAPK to negatively regulate the Ras/MAPK signaling pathway by stabilizing the transcriptional repressor ttk and consequently inhibiting photoreceptor cell development. This suggests that at least during eye development, it may act in both the positive and negative regulation of the Ras/MAPK signaling pathway to mediate the development of different cell types. Positively regulates border follicle cell migration during oogenesis by mediating the deubiquitination and stabilization of slbo. In the wing disks it positively regulates wg signaling by stabilizing arm. Has an effect on position-effect variegation. The sequence is that of Ubiquitin carboxyl-terminal hydrolase 47 from Drosophila melanogaster (Fruit fly).